The sequence spans 113 residues: Endoribonuclease SymE (113 aa).

One can recognise a SpoVT-AbrB domain in the interval 29 to 74 (SRYPDYSRIPAITLKGQWLEAAGFATGTAVDVKVMEGCIVLTAQPP).

The protein belongs to the SymE family.

It localises to the cytoplasm. Involved in the degradation and recycling of damaged RNA. It is itself a target for degradation by the ATP-dependent protease Lon. The sequence is that of Endoribonuclease SymE from Escherichia coli (strain K12 / MC4100 / BW2952).